Here is a 221-residue protein sequence, read N- to C-terminus: Secreted protein BARF1 (221 aa).

The N-terminal stretch at 1 to 20 is a signal peptide; the sequence is MARFIAQLLLLASCVAAGQA. 2 consecutive Ig-like domains span residues 21-120 and 124-220; these read VTAF…EHLS and PLTL…GYLS. The N-linked (GlcNAc...) asparagine; by host glycan is linked to Asn-95. Cys-146 and Cys-201 are oxidised to a cystine.

In terms of assembly, homohexamer. Interacts with human CSF1. In terms of processing, phosphorylated on serine and threonine by host.

The protein resides in the secreted. In terms of biological role, plays diverse functions in immunomodulation and oncogenicity, maybe by acting as a functional receptor for human CSF1. May inhibit interferon secretion from mononuclear cells. Exhibits oncogenic activity in vitro. The chain is Secreted protein BARF1 from Epstein-Barr virus (strain B95-8) (HHV-4).